Here is a 266-residue protein sequence, read N- to C-terminus: MRLIPLSTAEQVGKWAARHIVNRINAFKPTADRPFVLGLPTGGTPLTAYKALVEMHKAGEVSFKHVVTFNMDEYVGLPKEHPESYHSFMHRNFFDHVDIPAENINLLNGNAPDIDAECRQYEEKIRSYGKIHLFMGGVGNDGHIAFNEPASSLASRTRIKTLTHDTRVANSRFFDGDVNQVPKYALTVGVGTLLDAEEVMILVLGHQKAQALQAAVEGNVNHMWTISCLQLHPKAVVVCDEPSTMELKVKTLKYFNELEAENIKGL.

The active-site Proton acceptor; for enolization step is the Asp-72. Asp-141 (for ring-opening step) is an active-site residue. His-143 acts as the Proton acceptor; for ring-opening step in catalysis. The active-site For ring-opening step is the Glu-148.

It belongs to the glucosamine/galactosamine-6-phosphate isomerase family. NagB subfamily. In terms of assembly, homohexamer.

It catalyses the reaction alpha-D-glucosamine 6-phosphate + H2O = beta-D-fructose 6-phosphate + NH4(+). It functions in the pathway amino-sugar metabolism; N-acetylneuraminate degradation; D-fructose 6-phosphate from N-acetylneuraminate: step 5/5. With respect to regulation, allosterically activated by N-acetylglucosamine 6-phosphate (GlcNAc6P). Functionally, catalyzes the reversible isomerization-deamination of glucosamine 6-phosphate (GlcN6P) to form fructose 6-phosphate (Fru6P) and ammonium ion. This chain is Glucosamine-6-phosphate deaminase, found in Salmonella typhimurium (strain LT2 / SGSC1412 / ATCC 700720).